Here is a 442-residue protein sequence, read N- to C-terminus: Protein UNUSUAL FLORAL ORGANS (442 aa).

The tract at residues 1–85 (MDSTVFINNP…RFYSLLFSNT (85 aa)) is interaction with SKP1A. Residues 44–90 (GRIWSKLPPPLLDRVIAFLPPPAFFRTRCVCKRFYSLLFSNTFLETY) form the F-box domain.

In terms of assembly, part of a putative SCF (ASK/Cullin/F-box) ubiquitin ligase complex. Interacts with SKP1A/ASK1, SKP1B/ASK2 and ASK11.

The protein localises to the nucleus. It functions in the pathway protein modification; protein ubiquitination. Its function is as follows. Component of SCF(ASK-cullin-F-box) E3 ubiquitin ligase complexes, which may mediate the ubiquitination and subsequent proteasomal degradation of target proteins. Considered as a meristem identity factor required for normal growth of the young floral meristem. Acts together with LEAFY to positively regulate the B class floral homeotic genes APETALA3 and PISTILLATA. In this way, operates as a region-specific regulator for petal and stamen development. Alternatively, may play a role as a negative regulator of the C class floral homeotic genes. Interacts together with the SKP1-like protein ASK1 to form a ubiquitin E3 ligase complex and could indirectly promote the ubiquitination and degradation of specific proteins controlling the floral primordia development like repressors of B class floral homeotic genes. In Arabidopsis thaliana (Mouse-ear cress), this protein is Protein UNUSUAL FLORAL ORGANS (UFO).